Reading from the N-terminus, the 359-residue chain is Biotin synthase (359 aa).

One can recognise a Radical SAM core domain in the interval 67 to 302 (CCGNRVDLCS…QQILRYAGGR (236 aa)). [4Fe-4S] cluster is bound by residues cysteine 85, cysteine 89, and cysteine 92. Positions 130, 167, 227, and 297 each coordinate [2Fe-2S] cluster.

The protein belongs to the radical SAM superfamily. Biotin synthase family. Homodimer. [4Fe-4S] cluster is required as a cofactor. The cofactor is [2Fe-2S] cluster.

It carries out the reaction (4R,5S)-dethiobiotin + (sulfur carrier)-SH + 2 reduced [2Fe-2S]-[ferredoxin] + 2 S-adenosyl-L-methionine = (sulfur carrier)-H + biotin + 2 5'-deoxyadenosine + 2 L-methionine + 2 oxidized [2Fe-2S]-[ferredoxin]. It participates in cofactor biosynthesis; biotin biosynthesis; biotin from 7,8-diaminononanoate: step 2/2. In terms of biological role, catalyzes the conversion of dethiobiotin (DTB) to biotin by the insertion of a sulfur atom into dethiobiotin via a radical-based mechanism. The polypeptide is Biotin synthase (Gloeothece citriformis (strain PCC 7424) (Cyanothece sp. (strain PCC 7424))).